A 615-amino-acid polypeptide reads, in one-letter code: Glutamine--fructose-6-phosphate aminotransferase [isomerizing] (615 aa).

Catalysis depends on C2, which acts as the Nucleophile; for GATase activity. Positions 2–220 (CGIVGYVGPQ…QDQVVELRRD (219 aa)) constitute a Glutamine amidotransferase type-2 domain. 2 consecutive SIS domains span residues 287–427 (IPPG…VRGT) and 460–605 (LARS…VDQP). The For Fru-6P isomerization activity role is filled by K610.

Homodimer.

It is found in the cytoplasm. The enzyme catalyses D-fructose 6-phosphate + L-glutamine = D-glucosamine 6-phosphate + L-glutamate. Catalyzes the first step in hexosamine metabolism, converting fructose-6P into glucosamine-6P using glutamine as a nitrogen source. The chain is Glutamine--fructose-6-phosphate aminotransferase [isomerizing] from Streptomyces coelicolor (strain ATCC BAA-471 / A3(2) / M145).